Reading from the N-terminus, the 396-residue chain is Multidrug resistance protein MdtL (396 aa).

Topologically, residues Met-1–Tyr-4 are cytoplasmic. Residues Leu-5–Gly-25 form a helical membrane-spanning segment. Residues Leu-26–His-41 are Periplasmic-facing. Residues Ile-42 to Ala-62 traverse the membrane as a helical segment. The Cytoplasmic portion of the chain corresponds to Asp-63 to Arg-64. The helical transmembrane segment at Ile-65–Ala-85 threads the bilayer. Topologically, residues Ala-86–Asp-92 are periplasmic. Residues Leu-93 to Phe-113 traverse the membrane as a helical segment. Residues Ala-114–Met-131 are Cytoplasmic-facing. Residues Val-132–Leu-152 traverse the membrane as a helical segment. The Periplasmic segment spans residues Arg-153–Pro-157. Residues Ser-158–Leu-178 traverse the membrane as a helical segment. Topologically, residues Arg-179 to Val-209 are cytoplasmic. Residues Val-210–Ile-230 traverse the membrane as a helical segment. At Met-231 to Ser-242 the chain is on the periplasmic side. A helical membrane pass occupies residues Asn-243–Leu-263. Residues Asn-264–Thr-277 are Cytoplasmic-facing. Helical transmembrane passes span Leu-278–Phe-298 and Asn-299–Ser-319. Residues Gln-320 to Ser-333 are Cytoplasmic-facing. The chain crosses the membrane as a helical span at residues Ser-334–Leu-354. Topologically, residues Glu-355 to Asn-360 are periplasmic. Residues Ile-361–Pro-381 traverse the membrane as a helical segment. Topologically, residues Lys-382–Ala-396 are cytoplasmic.

Belongs to the major facilitator superfamily. DHA1 family. MdtL (TC 2.A.1.2.22) subfamily.

The protein resides in the cell inner membrane. The polypeptide is Multidrug resistance protein MdtL (Shewanella sp. (strain ANA-3)).